Reading from the N-terminus, the 203-residue chain is Imidazoleglycerol-phosphate dehydratase (203 aa).

This sequence belongs to the imidazoleglycerol-phosphate dehydratase family.

The protein localises to the cytoplasm. It catalyses the reaction D-erythro-1-(imidazol-4-yl)glycerol 3-phosphate = 3-(imidazol-4-yl)-2-oxopropyl phosphate + H2O. The protein operates within amino-acid biosynthesis; L-histidine biosynthesis; L-histidine from 5-phospho-alpha-D-ribose 1-diphosphate: step 6/9. In Parvibaculum lavamentivorans (strain DS-1 / DSM 13023 / NCIMB 13966), this protein is Imidazoleglycerol-phosphate dehydratase.